The chain runs to 152 residues: MWKEFKEFAMKGNVIDLAIGVVIGGAFGKIVTSLVNDIIMPVVGSLVGKVDFSNLYINLSGQQFNSLQEAQAAGAATINYGLFLNNLINFLIIAFSIFIVIKQINKLKNFTKKKEEVKVEATEKDCPYCYTKIDIKATRCPHCTSVLEEATN.

A run of 2 helical transmembrane segments spans residues 14-34 (VIDLAIGVVIGGAFGKIVTSL) and 81-101 (GLFLNNLINFLIIAFSIFIVI).

It belongs to the MscL family. As to quaternary structure, homopentamer.

The protein resides in the cell membrane. In terms of biological role, channel that opens in response to stretch forces in the membrane lipid bilayer. May participate in the regulation of osmotic pressure changes within the cell. This chain is Large-conductance mechanosensitive channel, found in Clostridium perfringens (strain ATCC 13124 / DSM 756 / JCM 1290 / NCIMB 6125 / NCTC 8237 / Type A).